The following is a 267-amino-acid chain: Cyclin-C (267 aa).

Residues 48-151 (IQVLGEQLKL…LLENLDCCLI (104 aa)) form the Cyclin N-terminal domain.

The protein belongs to the cyclin family. Cyclin C subfamily. In terms of assembly, component of the Cdk8 module of the Mediator complex.

It is found in the nucleus. Component of the Mediator complex, a coactivator involved in regulated gene transcription of nearly all RNA polymerase II-dependent genes. Mediator functions as a bridge to convey information from gene-specific regulatory proteins to the basal RNA polymerase II transcription machinery. Mediator is recruited to promoters by direct interactions with regulatory proteins and serves as a scaffold for the assembly of a functional preinitiation complex with RNA polymerase II and the general transcription factors. Binds to and activates cyclin-dependent kinase Cdk8 that phosphorylates the CTD (C-terminal domain) of the large subunit of RNA polymerase II (RNAp II), which may inhibit the formation of a transcription initiation complex. The sequence is that of Cyclin-C (CycC) from Drosophila pseudoobscura pseudoobscura (Fruit fly).